A 327-amino-acid chain; its full sequence is Malate dehydrogenase (327 aa).

12–18 is a binding site for NAD(+); that stretch reads GAAGQIA. Substrate-binding residues include Arg-93 and Arg-99. Residues Asn-106, Gln-113, and 130–132 contribute to the NAD(+) site; that span reads VGN. Asn-132 and Arg-163 together coordinate substrate. The active-site Proton acceptor is His-188.

It belongs to the LDH/MDH superfamily. MDH type 2 family.

It carries out the reaction (S)-malate + NAD(+) = oxaloacetate + NADH + H(+). Functionally, catalyzes the reversible oxidation of malate to oxaloacetate. This is Malate dehydrogenase from Acidiphilium cryptum (strain JF-5).